A 451-amino-acid polypeptide reads, in one-letter code: 23S rRNA (uracil(1939)-C(5))-methyltransferase RlmD (451 aa).

Residues 20–78 form the TRAM domain; the sequence is QIPAGKKQRLTIERLSDDGRGIAFLEGKTWFVAGSLAGEEVEARVLNARGKVVEARTER. The [4Fe-4S] cluster site is built by Cys91, Cys97, Cys100, and Cys179. S-adenosyl-L-methionine contacts are provided by Gln283, Phe312, Asn317, Glu333, Asp360, and Asp381. The active-site Nucleophile is Cys407.

The protein belongs to the class I-like SAM-binding methyltransferase superfamily. RNA M5U methyltransferase family. RlmD subfamily.

It carries out the reaction uridine(1939) in 23S rRNA + S-adenosyl-L-methionine = 5-methyluridine(1939) in 23S rRNA + S-adenosyl-L-homocysteine + H(+). Its function is as follows. Catalyzes the formation of 5-methyl-uridine at position 1939 (m5U1939) in 23S rRNA. The sequence is that of 23S rRNA (uracil(1939)-C(5))-methyltransferase RlmD from Pseudomonas savastanoi pv. phaseolicola (strain 1448A / Race 6) (Pseudomonas syringae pv. phaseolicola (strain 1448A / Race 6)).